A 239-amino-acid chain; its full sequence is mRNA turnover protein 4 homolog (239 aa).

The segment at 215–239 (FQQMGDDLPESASESTEESDSEDDD) is disordered. Residues Ser225, Ser229, and Ser233 each carry the phosphoserine modification. Residues 229–239 (STEESDSEDDD) show a composition bias toward acidic residues.

The protein belongs to the universal ribosomal protein uL10 family. In terms of assembly, associates with the pre-60S ribosomal particle. Interacts with MINAS-60 (product of an alternative open reading frame of RBM10).

It localises to the nucleus. The protein resides in the nucleolus. Its subcellular location is the cytoplasm. Component of the ribosome assembly machinery. Nuclear paralog of the ribosomal protein P0, it binds pre-60S subunits at an early stage of assembly in the nucleolus, and is replaced by P0 in cytoplasmic pre-60S subunits and mature 80S ribosomes. The polypeptide is mRNA turnover protein 4 homolog (MRTO4) (Homo sapiens (Human)).